The chain runs to 275 residues: LexA repressor (275 aa).

The segment at 1-50 is disordered; that stretch reads MKRSTPRPARSQAALTTSSEESPDRVERGGDGVATVTDFPDGPPDETGLT. The H-T-H motif DNA-binding region spans 73–93; it reads MREIGEAVGLTSTSSVAHQLM. The segment at 114 to 151 is disordered; it reads RSAESAVPDASAGHSPAADRAPSARRPPRGPSPIDSNP. Active-site for autocatalytic cleavage activity residues include S199 and K236.

It belongs to the peptidase S24 family. In terms of assembly, homodimer.

The enzyme catalyses Hydrolysis of Ala-|-Gly bond in repressor LexA.. Represses a number of genes involved in the response to DNA damage (SOS response), including recA and lexA. In the presence of single-stranded DNA, RecA interacts with LexA causing an autocatalytic cleavage which disrupts the DNA-binding part of LexA, leading to derepression of the SOS regulon and eventually DNA repair. In Acidothermus cellulolyticus (strain ATCC 43068 / DSM 8971 / 11B), this protein is LexA repressor.